The chain runs to 324 residues: Glyoxylate/hydroxypyruvate reductase B (324 aa).

Residues arginine 237 and glutamate 266 contribute to the active site. Histidine 285 serves as the catalytic Proton donor.

This sequence belongs to the D-isomer specific 2-hydroxyacid dehydrogenase family. GhrB subfamily. In terms of assembly, homodimer.

The protein resides in the cytoplasm. It carries out the reaction glycolate + NADP(+) = glyoxylate + NADPH + H(+). It catalyses the reaction (R)-glycerate + NAD(+) = 3-hydroxypyruvate + NADH + H(+). The catalysed reaction is (R)-glycerate + NADP(+) = 3-hydroxypyruvate + NADPH + H(+). In terms of biological role, catalyzes the NADPH-dependent reduction of glyoxylate and hydroxypyruvate into glycolate and glycerate, respectively. This Shigella dysenteriae serotype 1 (strain Sd197) protein is Glyoxylate/hydroxypyruvate reductase B.